Reading from the N-terminus, the 86-residue chain is Large ribosomal subunit protein bL31B (86 aa).

Belongs to the bacterial ribosomal protein bL31 family. Type B subfamily. As to quaternary structure, part of the 50S ribosomal subunit.

In Citrobacter koseri (strain ATCC BAA-895 / CDC 4225-83 / SGSC4696), this protein is Large ribosomal subunit protein bL31B.